The chain runs to 85 residues: uncharacterized protein (85 aa).

This is an uncharacterized protein from Caenorhabditis elegans.